Here is a 271-residue protein sequence, read N- to C-terminus: Thioredoxin-related transmembrane protein 2 homolog (271 aa).

Residues 1 to 28 (MTWKKQMALLAKPYYWVNILLAISYLLA) form the signal peptide. Residues 29 to 102 (KKTQFICTRL…AILWAYADFR (74 aa)) are Extracellular-facing. The helical transmembrane segment at 103 to 123 (YGLGFLLLCVLVGMVLPEPSY) threads the bilayer. The Thioredoxin domain maps to 112–262 (VLVGMVLPEP…YKEAIERLPI (151 aa)). Residues 124–271 (RGPEHITYFR…IAPKEAKKVQ (148 aa)) lie on the Cytoplasmic side of the membrane. The short motif at 268–271 (KKVQ) is the Di-lysine motif element.

It is found in the membrane. This is Thioredoxin-related transmembrane protein 2 homolog from Drosophila melanogaster (Fruit fly).